The primary structure comprises 420 residues: Serine hydroxymethyltransferase (420 aa).

(6S)-5,6,7,8-tetrahydrofolate contacts are provided by residues L123 and 127-129 (GHL). Residue K232 is modified to N6-(pyridoxal phosphate)lysine. A (6S)-5,6,7,8-tetrahydrofolate-binding site is contributed by 357–359 (SPF).

It belongs to the SHMT family. Homodimer. Pyridoxal 5'-phosphate is required as a cofactor.

Its subcellular location is the cytoplasm. It catalyses the reaction (6R)-5,10-methylene-5,6,7,8-tetrahydrofolate + glycine + H2O = (6S)-5,6,7,8-tetrahydrofolate + L-serine. The protein operates within one-carbon metabolism; tetrahydrofolate interconversion. It functions in the pathway amino-acid biosynthesis; glycine biosynthesis; glycine from L-serine: step 1/1. Its function is as follows. Catalyzes the reversible interconversion of serine and glycine with tetrahydrofolate (THF) serving as the one-carbon carrier. This reaction serves as the major source of one-carbon groups required for the biosynthesis of purines, thymidylate, methionine, and other important biomolecules. Also exhibits THF-independent aldolase activity toward beta-hydroxyamino acids, producing glycine and aldehydes, via a retro-aldol mechanism. This Streptococcus pyogenes serotype M2 (strain MGAS10270) protein is Serine hydroxymethyltransferase.